Reading from the N-terminus, the 204-residue chain is Protein LURP-one-related 14 (204 aa).

The protein belongs to the LOR family.

Its function is as follows. Might be related to the phospholipid scramblase and tubby-like superfamily of membrane tethered transcription factors. This chain is Protein LURP-one-related 14, found in Arabidopsis thaliana (Mouse-ear cress).